Reading from the N-terminus, the 345-residue chain is Protein SHI RELATED SEQUENCE 7 (345 aa).

Residues 7–28 (LGGRDHNKQDHHQEKDHNEDKS) form a disordered region. A compositionally biased stretch (basic and acidic residues) spans 9-28 (GRDHNKQDHHQEKDHNEDKS). Residues C119, C122, C130, C135, C139, and C146 each coordinate Zn(2+). Residues 119-146 (CQDCGNQAKKDCPHMRCRTCCKSRGFDC) constitute a DNA-binding region (zn(2)-C6 fungal-type; degenerate). Residues 168-200 (AVLPAKRIRDANSRGGGDDDDDDKEDEKNDSCG) are disordered. The Required for homo- and heterodimerization motif lies at 256–259 (IGGH).

It belongs to the SHI protein family. Mainly expressed in the filaments of flowers, the shoot apex regions and pollen. Also present in leaves.

Its subcellular location is the nucleus. In terms of biological role, transcription activator that binds DNA on 5'-ACTCTAC-3' and promotes auxin homeostasis-regulating gene expression (e.g. YUC genes), as well as genes affecting stamen development, cell expansion and timing of flowering. Synergistically with other SHI-related proteins, regulates gynoecium, stamen and leaf development in a dose-dependent manner, controlling apical-basal patterning. Promotes style and stigma formation, and influences vascular development during gynoecium development. May also have a role in the formation and/or maintenance of the shoot apical meristem (SAM). Regulates anther dehiscence and floral development. The protein is Protein SHI RELATED SEQUENCE 7 (SRS7) of Arabidopsis thaliana (Mouse-ear cress).